We begin with the raw amino-acid sequence, 170 residues long: Large ribosomal subunit protein uL10 (170 aa).

Belongs to the universal ribosomal protein uL10 family. Part of the ribosomal stalk of the 50S ribosomal subunit. The N-terminus interacts with L11 and the large rRNA to form the base of the stalk. The C-terminus forms an elongated spine to which L12 dimers bind in a sequential fashion forming a multimeric L10(L12)X complex.

Functionally, forms part of the ribosomal stalk, playing a central role in the interaction of the ribosome with GTP-bound translation factors. In Jannaschia sp. (strain CCS1), this protein is Large ribosomal subunit protein uL10.